The following is a 275-amino-acid chain: Centromere protein V (275 aa).

Low complexity-rich tracts occupy residues 1–10 and 17–51; these read MRRSRSSAAA and RSGASGASAAPAASAAAALAPSATRTRRSASQAGS. The interval 1-109 is disordered; that stretch reads MRRSRSSAAA…ATPTSSASNL (109 aa). Phosphoserine is present on residues serine 18 and serine 21. Arginine 43 carries the omega-N-methylarginine modification. Residues 79–100 are compositionally biased toward pro residues; that stretch reads GEPPPPELALLPPPPPPPPTPA. 3 positions are modified to phosphothreonine: threonine 98, threonine 101, and threonine 103. The CENP-V/GFA domain maps to 148 to 260; sequence HTGGCHCGAV…TEEFNGSDWE (113 aa). Residues cysteine 152, cysteine 154, cysteine 172, cysteine 174, cysteine 177, cysteine 216, and cysteine 219 each contribute to the Zn(2+) site. A Phosphoserine modification is found at serine 257.

Belongs to the Gfa family. Zn(2+) serves as cofactor.

The protein resides in the chromosome. Its subcellular location is the centromere. It localises to the kinetochore. The protein localises to the nucleus. It is found in the cytoplasm. The protein resides in the cytoskeleton. Its subcellular location is the spindle. Its function is as follows. Required for distribution of pericentromeric heterochromatin in interphase nuclei and for centromere formation and organization, chromosome alignment and cytokinesis. The sequence is that of Centromere protein V (CENPV) from Homo sapiens (Human).